A 142-amino-acid polypeptide reads, in one-letter code: Large ribosomal subunit protein uL13 (142 aa).

It belongs to the universal ribosomal protein uL13 family. Part of the 50S ribosomal subunit.

This protein is one of the early assembly proteins of the 50S ribosomal subunit, although it is not seen to bind rRNA by itself. It is important during the early stages of 50S assembly. The protein is Large ribosomal subunit protein uL13 of Edwardsiella ictaluri (strain 93-146).